The primary structure comprises 228 residues: Peptide deformylase (228 aa).

Disordered regions lie at residues 1–28 (MSQD…EGAV) and 116–138 (GVPK…EPDR). Composition is skewed to polar residues over residues 8-18 (TGCNTHSNTHS) and 123-133 (NKQQANNSTSC). Residues Cys141 and His183 each coordinate Fe cation. The active site involves Glu184. Residue His187 participates in Fe cation binding.

This sequence belongs to the polypeptide deformylase family. Requires Fe(2+) as cofactor.

The enzyme catalyses N-terminal N-formyl-L-methionyl-[peptide] + H2O = N-terminal L-methionyl-[peptide] + formate. Its function is as follows. Removes the formyl group from the N-terminal Met of newly synthesized proteins. Requires at least a dipeptide for an efficient rate of reaction. N-terminal L-methionine is a prerequisite for activity but the enzyme has broad specificity at other positions. The sequence is that of Peptide deformylase from Tropheryma whipplei (strain Twist) (Whipple's bacillus).